Reading from the N-terminus, the 256-residue chain is ATP synthase subunit a (256 aa).

The propeptide at 1-7 is removed in mature form; sequence MLNLFIT. The next 6 membrane-spanning stretches (helical) occupy residues 33 to 53, 92 to 112, 122 to 142, 148 to 168, 188 to 208, and 209 to 229; these read FTTF…LNLL, YFPL…ISMI, LIFI…IGLT, FFSL…LVLI, VLSG…LMSM, and SIIT…IVVL.

The protein belongs to the ATPase A chain family. In terms of assembly, F-type ATPases have 2 components, CF(1) - the catalytic core - and CF(0) - the membrane proton channel. CF(1) has five subunits: alpha(3), beta(3), gamma(1), delta(1), epsilon(1). CF(0) has three main subunits: a, b and c.

It localises to the mitochondrion inner membrane. Its function is as follows. Mitochondrial membrane ATP synthase (F(1)F(0) ATP synthase or Complex V) produces ATP from ADP in the presence of a proton gradient across the membrane which is generated by electron transport complexes of the respiratory chain. F-type ATPases consist of two structural domains, F(1) - containing the extramembraneous catalytic core and F(0) - containing the membrane proton channel, linked together by a central stalk and a peripheral stalk. During catalysis, ATP synthesis in the catalytic domain of F(1) is coupled via a rotary mechanism of the central stalk subunits to proton translocation. Key component of the proton channel; it may play a direct role in the translocation of protons across the membrane. This is ATP synthase subunit a (ATP6) from Kluyveromyces lactis (strain ATCC 8585 / CBS 2359 / DSM 70799 / NBRC 1267 / NRRL Y-1140 / WM37) (Yeast).